Reading from the N-terminus, the 591-residue chain is Aspartate--tRNA(Asp/Asn) ligase (591 aa).

L-aspartate is bound at residue E176. Residues 200–203 (QLFK) are aspartate. R222 is a binding site for L-aspartate. Residues 222-224 (RDE) and Q231 contribute to the ATP site. H450 lines the L-aspartate pocket. E484 is a binding site for ATP. R491 serves as a coordination point for L-aspartate. 536 to 539 (GLDR) is a binding site for ATP.

Belongs to the class-II aminoacyl-tRNA synthetase family. Type 1 subfamily. Homodimer.

It localises to the cytoplasm. The enzyme catalyses tRNA(Asx) + L-aspartate + ATP = L-aspartyl-tRNA(Asx) + AMP + diphosphate. Aspartyl-tRNA synthetase with relaxed tRNA specificity since it is able to aspartylate not only its cognate tRNA(Asp) but also tRNA(Asn). Reaction proceeds in two steps: L-aspartate is first activated by ATP to form Asp-AMP and then transferred to the acceptor end of tRNA(Asp/Asn). This Bacillus anthracis (strain A0248) protein is Aspartate--tRNA(Asp/Asn) ligase.